The following is a 354-amino-acid chain: Uroporphyrinogen decarboxylase (354 aa).

Substrate contacts are provided by residues 25 to 29 (RQAGR), D75, Y152, T207, and H330.

It belongs to the uroporphyrinogen decarboxylase family. As to quaternary structure, homodimer.

The protein resides in the cytoplasm. The enzyme catalyses uroporphyrinogen III + 4 H(+) = coproporphyrinogen III + 4 CO2. The protein operates within porphyrin-containing compound metabolism; protoporphyrin-IX biosynthesis; coproporphyrinogen-III from 5-aminolevulinate: step 4/4. Catalyzes the decarboxylation of four acetate groups of uroporphyrinogen-III to yield coproporphyrinogen-III. The polypeptide is Uroporphyrinogen decarboxylase (Xanthomonas campestris pv. campestris (strain 8004)).